We begin with the raw amino-acid sequence, 92 residues long: Large ribosomal subunit protein eL43A (92 aa).

A C4-type zinc finger spans residues 39 to 60 (CSFCGKKTVKRGAAGIWTCSCC). At S40 the chain carries Phosphoserine.

The protein belongs to the eukaryotic ribosomal protein eL43 family. In terms of assembly, component of the large ribosomal subunit (LSU). Mature yeast ribosomes consist of a small (40S) and a large (60S) subunit. The 40S small subunit contains 1 molecule of ribosomal RNA (18S rRNA) and 33 different proteins (encoded by 57 genes). The large 60S subunit contains 3 rRNA molecules (25S, 5.8S and 5S rRNA) and 46 different proteins (encoded by 81 genes).

The protein resides in the cytoplasm. Functionally, component of the ribosome, a large ribonucleoprotein complex responsible for the synthesis of proteins in the cell. The small ribosomal subunit (SSU) binds messenger RNAs (mRNAs) and translates the encoded message by selecting cognate aminoacyl-transfer RNA (tRNA) molecules. The large subunit (LSU) contains the ribosomal catalytic site termed the peptidyl transferase center (PTC), which catalyzes the formation of peptide bonds, thereby polymerizing the amino acids delivered by tRNAs into a polypeptide chain. The nascent polypeptides leave the ribosome through a tunnel in the LSU and interact with protein factors that function in enzymatic processing, targeting, and the membrane insertion of nascent chains at the exit of the ribosomal tunnel. This Saccharomyces cerevisiae (strain ATCC 204508 / S288c) (Baker's yeast) protein is Large ribosomal subunit protein eL43A.